The sequence spans 427 residues: Histidinol dehydrogenase (427 aa).

3 residues coordinate substrate: Ser-232, Gln-254, and His-257. Zn(2+) is bound by residues Gln-254 and His-257. Catalysis depends on proton acceptor residues Glu-322 and His-323. His-323, Asp-356, Glu-410, and His-415 together coordinate substrate. Asp-356 serves as a coordination point for Zn(2+). Position 415 (His-415) interacts with Zn(2+).

The protein belongs to the histidinol dehydrogenase family. Requires Zn(2+) as cofactor.

The enzyme catalyses L-histidinol + 2 NAD(+) + H2O = L-histidine + 2 NADH + 3 H(+). It participates in amino-acid biosynthesis; L-histidine biosynthesis; L-histidine from 5-phospho-alpha-D-ribose 1-diphosphate: step 9/9. Functionally, catalyzes the sequential NAD-dependent oxidations of L-histidinol to L-histidinaldehyde and then to L-histidine. This Listeria monocytogenes serotype 4b (strain F2365) protein is Histidinol dehydrogenase.